The following is a 465-amino-acid chain: Cysteine--tRNA ligase (465 aa).

C29 is a binding site for Zn(2+). A 'HIGH' region motif is present at residues 31 to 41 (PTVYNYIHIGN). Positions 209, 234, and 238 each coordinate Zn(2+). Positions 266–270 (KMSKS) match the 'KMSKS' region motif. K269 is an ATP binding site. S270 is subject to Phosphoserine.

Belongs to the class-I aminoacyl-tRNA synthetase family. As to quaternary structure, monomer. Zn(2+) is required as a cofactor.

It is found in the cytoplasm. The catalysed reaction is tRNA(Cys) + L-cysteine + ATP = L-cysteinyl-tRNA(Cys) + AMP + diphosphate. This chain is Cysteine--tRNA ligase, found in Bacillus thuringiensis (strain Al Hakam).